Consider the following 270-residue polypeptide: MTSLKQQPPHLLRGIPLAVRNLKKAFGTREVLKDIDLHIPAGQFVAIVGRSGCGKSTLLRLLAGLDKPTEGQLLAGSAPLDDAREDTRLMFQEARLLPWKKIIDNVGLGLSGDWRAQALEALEAVGLAERANEWPAALSGGQKQRVALARALIHKPRLLLLDEPLGALDALTRIEMQQLIEKLWHQYGFTVLLVTHDVSEAVAIADRVILIEEGQIGLDLLVDLPRPRVRGSHRLAALEAEVLNRVLALPGSPPDPEPFSPLPTQLRWAN.

The 222-residue stretch at 17–238 (LAVRNLKKAF…VRGSHRLAAL (222 aa)) folds into the ABC transporter domain. Position 49 to 56 (49 to 56 (GRSGCGKS)) interacts with ATP.

It belongs to the ABC transporter superfamily. Aliphatic sulfonates importer (TC 3.A.1.17.2) family. In terms of assembly, the complex is composed of two ATP-binding proteins (SsuB), two transmembrane proteins (SsuC) and a solute-binding protein (SsuA).

It is found in the cell inner membrane. It catalyses the reaction ATP + H2O + aliphatic sulfonate-[sulfonate-binding protein]Side 1 = ADP + phosphate + aliphatic sulfonateSide 2 + [sulfonate-binding protein]Side 1.. Its function is as follows. Part of the ABC transporter complex SsuABC involved in aliphatic sulfonates import. Responsible for energy coupling to the transport system. In Pseudomonas savastanoi pv. phaseolicola (strain 1448A / Race 6) (Pseudomonas syringae pv. phaseolicola (strain 1448A / Race 6)), this protein is Aliphatic sulfonates import ATP-binding protein SsuB 3.